A 1097-amino-acid polypeptide reads, in one-letter code: DNA-directed RNA polymerase subunit beta (1097 aa).

The tract at residues 1072–1097 is disordered; it reads QDINPRRNTPSRPTYESLGTSEYEED. A compositionally biased stretch (polar residues) spans 1077 to 1091; the sequence is RRNTPSRPTYESLGT.

The protein belongs to the RNA polymerase beta chain family. In cyanobacteria the RNAP catalytic core is composed of 2 alpha, 1 beta, 1 beta', 1 gamma and 1 omega subunit. When a sigma factor is associated with the core the holoenzyme is formed, which can initiate transcription.

It catalyses the reaction RNA(n) + a ribonucleoside 5'-triphosphate = RNA(n+1) + diphosphate. Functionally, DNA-dependent RNA polymerase catalyzes the transcription of DNA into RNA using the four ribonucleoside triphosphates as substrates. In Prochlorococcus marinus (strain MIT 9215), this protein is DNA-directed RNA polymerase subunit beta.